Consider the following 234-residue polypeptide: Phosphoribosylformylglycinamidine synthase subunit PurQ (234 aa).

One can recognise a Glutamine amidotransferase type-1 domain in the interval 3 to 231 (AAVVVFPGSN…ALYLERRKDH (229 aa)). The Nucleophile role is filled by Cys-87. Residues His-200 and Glu-202 contribute to the active site.

In terms of assembly, part of the FGAM synthase complex composed of 1 PurL, 1 PurQ and 2 PurS subunits.

The protein resides in the cytoplasm. It carries out the reaction N(2)-formyl-N(1)-(5-phospho-beta-D-ribosyl)glycinamide + L-glutamine + ATP + H2O = 2-formamido-N(1)-(5-O-phospho-beta-D-ribosyl)acetamidine + L-glutamate + ADP + phosphate + H(+). It catalyses the reaction L-glutamine + H2O = L-glutamate + NH4(+). It functions in the pathway purine metabolism; IMP biosynthesis via de novo pathway; 5-amino-1-(5-phospho-D-ribosyl)imidazole from N(2)-formyl-N(1)-(5-phospho-D-ribosyl)glycinamide: step 1/2. Functionally, part of the phosphoribosylformylglycinamidine synthase complex involved in the purines biosynthetic pathway. Catalyzes the ATP-dependent conversion of formylglycinamide ribonucleotide (FGAR) and glutamine to yield formylglycinamidine ribonucleotide (FGAM) and glutamate. The FGAM synthase complex is composed of three subunits. PurQ produces an ammonia molecule by converting glutamine to glutamate. PurL transfers the ammonia molecule to FGAR to form FGAM in an ATP-dependent manner. PurS interacts with PurQ and PurL and is thought to assist in the transfer of the ammonia molecule from PurQ to PurL. This is Phosphoribosylformylglycinamidine synthase subunit PurQ from Pseudothermotoga lettingae (strain ATCC BAA-301 / DSM 14385 / NBRC 107922 / TMO) (Thermotoga lettingae).